A 339-amino-acid chain; its full sequence is MQALVNKIWYQGHPLRWLLLPLSWLFAVITYVRRALFRLGIKSQTVMPVPVIVVGNITVGGSGKTPTVIYLIELLRQHGFTPGVVSRGYGVDIQGVKTVNLGASAAEVGDEPAMIVARTQVPMVVGAKRVDAANALIAEFGVDVIICDDGLQHYALGRDIELVVIDGQRGLGNGLLLPAGPLREGAWRLDAVDFIVNNGGPAAKGQFEMQLAPTEVKPVKCDLTSGEYSFDKSQPLVAMAGIGNPARFFESLRAQGYQLALCQGFDDHQPYDKTQLRDLAQDLPLLMTEKDAVKCRDFAQENWWYLAVNAKLSPQFDEQLLARLREVAAAKQGNFHGIR.

58-65 contacts ATP; it reads TVGGSGKT.

Belongs to the LpxK family.

It catalyses the reaction a lipid A disaccharide + ATP = a lipid IVA + ADP + H(+). The protein operates within glycolipid biosynthesis; lipid IV(A) biosynthesis; lipid IV(A) from (3R)-3-hydroxytetradecanoyl-[acyl-carrier-protein] and UDP-N-acetyl-alpha-D-glucosamine: step 6/6. In terms of biological role, transfers the gamma-phosphate of ATP to the 4'-position of a tetraacyldisaccharide 1-phosphate intermediate (termed DS-1-P) to form tetraacyldisaccharide 1,4'-bis-phosphate (lipid IVA). This Shewanella baltica (strain OS185) protein is Tetraacyldisaccharide 4'-kinase.